A 468-amino-acid chain; its full sequence is MAISVDQTPAGKYPAKVHAKRVAARIQELGHGDSGIIYLEGQKTHMIEDSDGEMPFRQRRNFFYLSGCPLPDSYLTYDIKADKLTIFIPPIDPASVIWSGLPLSVEEALEIYDVDAVLSTAEVNASLAHYCSAQGGKKVFAIADQVSPHITFLPFQEIDFDVLKRAVEESRVVKDSYEIALLRRANEISSKAHVAVFKAATSARNERELEAIFVGACMSSGCREQSYHPIFASGTNAATLHYQKNDEDLVDSVTGQRRLNMLIDAGAEYRNYCADITRVVPLSGKFSPESREIYDIVLEMQNSSLAMIKAGVMWEDVHSTSHRVAIRGLLKLGILRSTEDELFEKGISVAFFPHGLGHYLGMDTHDTGGNPNYADKDPKFKYLRLRGPLASGGVVTVEPGIYFCRFIIDPYLSSPDLGKYINADVLERYWSVGGVRIEDNVVVTDSGYDNLTTAPKLPEEIERLATEK.

Residues D264, D275, E398, and E438 each coordinate Mn(2+).

The protein belongs to the peptidase M24B family. Mn(2+) is required as a cofactor.

The enzyme catalyses Release of any N-terminal amino acid, including proline, that is linked to proline, even from a dipeptide or tripeptide.. Its function is as follows. Catalyzes the removal of a penultimate prolyl residue from the N-termini of peptides. The chain is Probable Xaa-Pro aminopeptidase PEPP (PEPP) from Paracoccidioides brasiliensis (strain Pb03).